The sequence spans 450 residues: Tubulin alpha chain, testis-specific (450 aa).

The MREC motif signature appears at 1-4 (MREC). Glutamine 11 is a binding site for GTP. The residue at position 40 (lysine 40) is an N6-acetyllysine. Glutamate 71, serine 140, glycine 144, threonine 145, threonine 179, asparagine 206, and asparagine 228 together coordinate GTP. Position 71 (glutamate 71) interacts with Mg(2+). Residue glutamate 254 is part of the active site.

Belongs to the tubulin family. Dimer of alpha and beta chains. A typical microtubule is a hollow water-filled tube with an outer diameter of 25 nm and an inner diameter of 15 nM. Alpha-beta heterodimers associate head-to-tail to form protofilaments running lengthwise along the microtubule wall with the beta-tubulin subunit facing the microtubule plus end conferring a structural polarity. Microtubules usually have 13 protofilaments but different protofilament numbers can be found in some organisms and specialized cells. The cofactor is Mg(2+). Some glutamate residues at the C-terminus are polyglycylated, resulting in polyglycine chains on the gamma-carboxyl group. Glycylation is mainly limited to tubulin incorporated into axonemes (cilia and flagella) whereas glutamylation is prevalent in neuronal cells, centrioles, axonemes, and the mitotic spindle. Both modifications can coexist on the same protein on adjacent residues, and lowering polyglycylation levels increases polyglutamylation, and reciprocally. The precise function of polyglycylation is still unclear. Post-translationally, some glutamate residues at the C-terminus are polyglutamylated, resulting in polyglutamate chains on the gamma-carboxyl group. Polyglutamylation plays a key role in microtubule severing by spastin (SPAST). SPAST preferentially recognizes and acts on microtubules decorated with short polyglutamate tails: severing activity by SPAST increases as the number of glutamates per tubulin rises from one to eight, but decreases beyond this glutamylation threshold. In terms of processing, acetylation of alpha chains at Lys-40 is located inside the microtubule lumen. This modification has been correlated with increased microtubule stability, intracellular transport and ciliary assembly. Undergoes a tyrosination/detyrosination cycle, the cyclic removal and re-addition of a C-terminal tyrosine residue by the enzymes tubulin tyrosine carboxypeptidase (MATCAP, VASH1 or VASH2) and tubulin tyrosine ligase (TTL), respectively. Post-translationally, tyrosination promotes microtubule interaction with CAP-Gly microtubule plus-end tracking proteins. Tyrosinated tubulins regulate the initiation of dynein-driven motility. In terms of processing, detyrosination is involved in metaphase plate congression by guiding chromosomes during mitosis. Detyrosination increases microtubules-dependent mechanotransduction in dystrophic cardiac and skeletal muscle. In cardiomyocytes, detyrosinated microtubules are required to resist to contractile compression during contraction. As to expression, testis specific.

It localises to the cytoplasm. The protein resides in the cytoskeleton. It carries out the reaction GTP + H2O = GDP + phosphate + H(+). Functionally, tubulin is the major constituent of microtubules, a cylinder consisting of laterally associated linear protofilaments composed of alpha- and beta-tubulin heterodimers. Microtubules grow by the addition of GTP-tubulin dimers to the microtubule end, where a stabilizing cap forms. Below the cap, tubulin dimers are in GDP-bound state, owing to GTPase activity of alpha-tubulin. The sequence is that of Tubulin alpha chain, testis-specific from Oncorhynchus mykiss (Rainbow trout).